The chain runs to 210 residues: Probable nicotinate-nucleotide adenylyltransferase (210 aa).

This sequence belongs to the NadD family.

The catalysed reaction is nicotinate beta-D-ribonucleotide + ATP + H(+) = deamido-NAD(+) + diphosphate. It functions in the pathway cofactor biosynthesis; NAD(+) biosynthesis; deamido-NAD(+) from nicotinate D-ribonucleotide: step 1/1. Catalyzes the reversible adenylation of nicotinate mononucleotide (NaMN) to nicotinic acid adenine dinucleotide (NaAD). The sequence is that of Probable nicotinate-nucleotide adenylyltransferase from Streptococcus pyogenes serotype M18 (strain MGAS8232).